The primary structure comprises 478 residues: Divinyl ether synthase CYP74D2 (478 aa).

Position 431 (Cys-431) interacts with heme.

It belongs to the cytochrome P450 family. 9-divinyl ether synthase subfamily. In terms of tissue distribution, expressed in roots.

It catalyses the reaction (9S)-hydroperoxy-(10E,12Z)-octadecadienoate = colneleate + H2O. It carries out the reaction (9S)-hydroperoxy-(10E,12Z,15Z)-octadecatrienoate = colnelenate + H2O. In terms of biological role, involved in the biosynthesis of the anti-fungal and antibacterial toxins colneleate and colnelenate. Can use (9S)-hydroperoxy-(10E,12Z)-octadecadienoate (9-HPOD) and (9S)-hydroperoxy-(10E,12Z,15Z)-octadecatrienoate (9-HPOT) as substrates but has no activity with the corresponding 13-hydroperoxides (13-HPOD and 13-HPOT). This is Divinyl ether synthase CYP74D2 from Solanum tuberosum (Potato).